We begin with the raw amino-acid sequence, 1439 residues long: DNA-directed RNA polymerase subunit beta' (1439 aa).

Zn(2+)-binding residues include Cys70, Cys72, Cys85, and Cys88. Asp504, Asp506, and Asp508 together coordinate Mg(2+). Residues Cys862, Cys936, Cys943, and Cys946 each contribute to the Zn(2+) site.

This sequence belongs to the RNA polymerase beta' chain family. In terms of assembly, the RNAP catalytic core consists of 2 alpha, 1 beta, 1 beta' and 1 omega subunit. When a sigma factor is associated with the core the holoenzyme is formed, which can initiate transcription. Mg(2+) serves as cofactor. It depends on Zn(2+) as a cofactor.

It carries out the reaction RNA(n) + a ribonucleoside 5'-triphosphate = RNA(n+1) + diphosphate. Its function is as follows. DNA-dependent RNA polymerase catalyzes the transcription of DNA into RNA using the four ribonucleoside triphosphates as substrates. This Gluconobacter oxydans (strain 621H) (Gluconobacter suboxydans) protein is DNA-directed RNA polymerase subunit beta'.